A 474-amino-acid chain; its full sequence is Lipoprotein lipase (474 aa).

The first 27 residues, 1–27 (MESKALLLVVLGVWLQSLTAFRGGVAA), serve as a signal peptide directing secretion. The interval 32–53 (RDFSDIESKFALRTPEDTAEDT) is interaction with GPIHBP1. An intrachain disulfide couples cysteine 54 to cysteine 67. N-linked (GlcNAc...) asparagine glycosylation is present at asparagine 70. Tyrosine 121 carries the post-translational modification 3'-nitrotyrosine. Residue serine 159 is the Nucleophile of the active site. The Charge relay system role is filled by aspartate 183. A 3'-nitrotyrosine modification is found at tyrosine 191. Residues alanine 194, arginine 197, serine 199, and aspartate 202 each coordinate Ca(2+). A disulfide bridge connects residues cysteine 243 and cysteine 266. Residues 243–266 (CNIGEAIRVIAERGLGDVDQLVKC) are essential for determining substrate specificity. Histidine 268 acts as the Charge relay system in catalysis. 2 disulfides stabilise this stretch: cysteine 291–cysteine 310 and cysteine 302–cysteine 305. Residues 341-464 (FHYQVKIHFS…KGKDSAVFVK (124 aa)) enclose the PLAT domain. 3'-nitrotyrosine is present on tyrosine 343. The N-linked (GlcNAc...) asparagine glycan is linked to asparagine 386. Residues 417–421 (WPDWW) form an important for interaction with lipoprotein particles region. The interval 430-434 (RIRVK) is important for heparin binding. Residues 443 to 467 (IFCAREKVSHLQKGKDSAVFVKCHD) are interaction with GPIHBP1. Residues cysteine 445 and cysteine 465 are joined by a disulfide bond.

It belongs to the AB hydrolase superfamily. Lipase family. Homodimer. Interacts with GPIHBP1 with 1:1 stoichiometry. Interacts with APOC2; the interaction activates LPL activity in the presence of lipids. Interaction with heparan sulfate proteoglycans is required to protect LPL against loss of activity. Associates with lipoprotein particles in blood plasma. Interacts with LMF1 and SEL1L; interaction with SEL1L is required to prevent aggregation of newly synthesized LPL in the endoplasmic reticulum (ER), and for normal export of LPL from the ER to the extracellular space. Interacts with SORL1; SORL1 acts as a sorting receptor, promoting LPL localization to endosomes and later to lysosomes, leading to degradation of newly synthesized LPL. Post-translationally, tyrosine nitration after lipopolysaccharide (LPS) challenge down-regulates the lipase activity. N-glycosylated. Detected in white and brown adipose tissue and heart muscle, especially at the lumenal surface of capillaries. Detected on capillary endothelium in the lactating mammary gland. Detected in blood plasma (at protein level). Expressed in liver, epididymal fat, heart, psoas muscle, lactating mammary gland, adrenal, lung, and ovary. Highest levels in heart and adrenal gland.

The protein localises to the cell membrane. It localises to the secreted. The protein resides in the extracellular space. It is found in the extracellular matrix. The catalysed reaction is a triacylglycerol + H2O = a diacylglycerol + a fatty acid + H(+). It catalyses the reaction a 1,2-diacyl-sn-glycero-3-phosphocholine + H2O = a 2-acyl-sn-glycero-3-phosphocholine + a fatty acid + H(+). It carries out the reaction 1,2,3-tri-(9Z-octadecenoyl)-glycerol + H2O = di-(9Z)-octadecenoylglycerol + (9Z)-octadecenoate + H(+). The enzyme catalyses 1,2-di-(9Z-octadecenoyl)-sn-glycero-3-phosphocholine + H2O = (9Z-octadecenoyl)-sn-glycero-3-phosphocholine + (9Z)-octadecenoate + H(+). The catalysed reaction is 1,2,3-tributanoylglycerol + H2O = dibutanoylglycerol + butanoate + H(+). It catalyses the reaction 1,2-dihexadecanoyl-sn-glycero-3-phosphocholine + H2O = hexadecanoyl-sn-glycero-3-phosphocholine + hexadecanoate + H(+). Its activity is regulated as follows. The apolipoprotein APOC2 acts as a coactivator of LPL activity. Ca(2+) binding promotes protein stability and formation of the active homodimer. Interaction with GPIHBP1 protects LPL against inactivation by ANGPTL4. Key enzyme in triglyceride metabolism. Catalyzes the hydrolysis of triglycerides from circulating chylomicrons and very low density lipoproteins (VLDL), and thereby plays an important role in lipid clearance from the blood stream, lipid utilization and storage. Although it has both phospholipase and triglyceride lipase activities it is primarily a triglyceride lipase with low but detectable phospholipase activity. Mediates margination of triglyceride-rich lipoprotein particles in capillaries. Recruited to its site of action on vascular endothelium by binding to GPIHBP1 and cell surface heparan sulfate proteoglycans. This is Lipoprotein lipase (Lpl) from Mus musculus (Mouse).